We begin with the raw amino-acid sequence, 208 residues long: Rac-like GTP-binding protein ARAC8 (208 aa).

Gly15–Thr22 serves as a coordination point for GTP. An Effector region motif is present at residues Tyr37–Phe45. GTP contacts are provided by residues Asp62–Gln66 and Thr120–Asp123. S-palmitoyl cysteine attachment occurs at residues Cys199 and Cys205.

This sequence belongs to the small GTPase superfamily. Rho family. As to quaternary structure, interacts with ICR1. Binds to SPK1. Although this sequence has a C-terminal -CXXX, it is palmitoylated at Cys-205, rather than prenylated.

It localises to the membrane. Functionally, acts as a negative regulator of abscisic acid (ABA) responses. The polypeptide is Rac-like GTP-binding protein ARAC8 (ARAC8) (Arabidopsis thaliana (Mouse-ear cress)).